A 457-amino-acid polypeptide reads, in one-letter code: Peptidyl-prolyl cis-trans isomerase FKBP5 (457 aa).

M1 is modified (N-acetylmethionine). The segment at 1–26 (MTTDEGAKNNGESPTATVAEQGEDIT) is disordered. S13 carries the post-translational modification Phosphoserine. 2 consecutive PPIase FKBP-type domains span residues 50–138 (GDKV…LDFK) and 165–251 (GATV…KSFE). TPR repeat units lie at residues 268 to 301 (AAIV…LEME), 317 to 350 (LAAF…DSAN), and 351 to 384 (GKGL…NPQN). The segment at 420-457 (DAKEEANKAMGKKTSEGVTNEKGTDSQAMEEEKPEGHV) is disordered. S445 carries the post-translational modification Phosphoserine.

Part of a heteromultimeric cytoplasmic complex with HSP90AA1, HSPA1A/HSPA1B and steroid receptors. Upon ligand binding dissociates from the complex and FKBP4 takes its place. Interacts with functionally mature heterooligomeric progesterone receptor complexes along with HSP90 and TEBP. Interacts with IFI44L; this interaction modulates the kinase activity of IKBKB and IKBKE. Interacts with IKBKB and IKBKE.

Its subcellular location is the cytoplasm. The protein resides in the nucleus. It catalyses the reaction [protein]-peptidylproline (omega=180) = [protein]-peptidylproline (omega=0). Inhibited by FK506 but not cyclosporin. Its function is as follows. Immunophilin protein with PPIase and co-chaperone activities. Component of unligated steroid receptors heterocomplexes through interaction with heat-shock protein 90 (HSP90). Plays a role in the intracellular trafficking of heterooligomeric forms of steroid hormone receptors maintaining the complex into the cytoplasm when unliganded. Acts as a regulator of Akt/AKT1 activity by promoting the interaction between Akt/AKT1 and PHLPP1, thereby enhancing dephosphorylation and subsequent activation of Akt/AKT1. Interacts with IKBKE and IKBKB which facilitates IKK complex assembly leading to increased IKBKE and IKBKB kinase activity, NF-kappaB activation, and IFN production. The polypeptide is Peptidyl-prolyl cis-trans isomerase FKBP5 (FKBP5) (Pongo abelii (Sumatran orangutan)).